The primary structure comprises 287 residues: Glutamate racemase (287 aa).

Over residues 1-15 the composition is skewed to polar residues; sequence MATKPQDANTTSREA. The segment at 1 to 25 is disordered; sequence MATKPQDANTTSREAITSKADSPPR. Substrate contacts are provided by residues 32–33 and 64–65; these read DS and YG. Cysteine 96 acts as the Proton donor/acceptor in catalysis. 97-98 contributes to the substrate binding site; it reads NT. Residue cysteine 208 is the Proton donor/acceptor of the active site. 209–210 provides a ligand contact to substrate; it reads TH.

Belongs to the aspartate/glutamate racemases family.

It catalyses the reaction L-glutamate = D-glutamate. It functions in the pathway cell wall biogenesis; peptidoglycan biosynthesis. Functionally, provides the (R)-glutamate required for cell wall biosynthesis. The chain is Glutamate racemase from Yersinia pseudotuberculosis serotype I (strain IP32953).